Here is a 642-residue protein sequence, read N- to C-terminus: 1-deoxy-D-xylulose-5-phosphate synthase 2 (642 aa).

Thiamine diphosphate is bound by residues histidine 79 and 120–122; that span reads AHS. Aspartate 155 contacts Mg(2+). Thiamine diphosphate is bound by residues 156–157, asparagine 184, tyrosine 293, and glutamate 375; that span reads GS. Residue asparagine 184 coordinates Mg(2+).

Belongs to the transketolase family. DXPS subfamily. As to quaternary structure, homodimer. Requires Mg(2+) as cofactor. The cofactor is thiamine diphosphate.

It carries out the reaction D-glyceraldehyde 3-phosphate + pyruvate + H(+) = 1-deoxy-D-xylulose 5-phosphate + CO2. The protein operates within metabolic intermediate biosynthesis; 1-deoxy-D-xylulose 5-phosphate biosynthesis; 1-deoxy-D-xylulose 5-phosphate from D-glyceraldehyde 3-phosphate and pyruvate: step 1/1. Catalyzes the acyloin condensation reaction between C atoms 2 and 3 of pyruvate and glyceraldehyde 3-phosphate to yield 1-deoxy-D-xylulose-5-phosphate (DXP). In Roseobacter denitrificans (strain ATCC 33942 / OCh 114) (Erythrobacter sp. (strain OCh 114)), this protein is 1-deoxy-D-xylulose-5-phosphate synthase 2.